A 106-amino-acid polypeptide reads, in one-letter code: Large ribosomal subunit protein uL24 (106 aa).

Belongs to the universal ribosomal protein uL24 family. Part of the 50S ribosomal subunit.

Its function is as follows. One of two assembly initiator proteins, it binds directly to the 5'-end of the 23S rRNA, where it nucleates assembly of the 50S subunit. In terms of biological role, one of the proteins that surrounds the polypeptide exit tunnel on the outside of the subunit. The sequence is that of Large ribosomal subunit protein uL24 from Clostridium tetani (strain Massachusetts / E88).